The chain runs to 140 residues: Pro-variola growth factor (140 aa).

The N-terminal stretch at 1–18 is a signal peptide; it reads MSMKYLMLLFAAMIIRSF. Residues 19 to 100 lie on the Extracellular side of the membrane; sequence ANSGNAIETT…SEKPNTTTSY (82 aa). A glycan (N-linked (GlcNAc...) asparagine; by host) is linked at Asn34. The EGF-like domain maps to 41–81; it reads AIRLCGPEGDRYCFHGICIHARDIDGMYCRCSHGYTGIRCQ. Intrachain disulfides connect Cys45-Cys58, Cys53-Cys69, and Cys71-Cys80. Residue Asn95 is glycosylated (N-linked (GlcNAc...) asparagine; by host). The chain crosses the membrane as a helical span at residues 101–121; it reads IPSPGIVLVLLVSIIVCCLLF. The Cytoplasmic segment spans residues 122–140; the sequence is VYRFTRRTNKLPLQDMVVP.

It belongs to the orthopoxvirus OPG019 family. Variola growth factor interacts with host EGFR and promotes EGFR dimerization.

It localises to the host membrane. The protein localises to the secreted. Stimulates cellular proliferation (hyperplasia)and mobility around infected cells to promote rapid and efficient spread of infection. This effect is beneficial for virus replication in vivo, because poxviruses replicate possibly better in proliferating cells than in quiescent cells. Acts by binding host EGFR, inducing its dimerization, autophosphorylation and leading to activation of several cellular pathways regulating cell proliferation or cell survival. The activation by host EGFR of mitogen activated protein kinases (MAPK) and extracellular-signal regulated kinases (ERK) are essential for the positive effect of vaccinia growth factor on poxvirus virulence in vivo. The polypeptide is Pro-variola growth factor (OPG019) (Variola virus (isolate Human/India/Ind3/1967) (VARV)).